Consider the following 192-residue polypeptide: dTTP/UTP pyrophosphatase (192 aa).

Asp71 acts as the Proton acceptor in catalysis.

The protein belongs to the Maf family. YhdE subfamily. Requires a divalent metal cation as cofactor.

It localises to the cytoplasm. It catalyses the reaction dTTP + H2O = dTMP + diphosphate + H(+). The enzyme catalyses UTP + H2O = UMP + diphosphate + H(+). Nucleoside triphosphate pyrophosphatase that hydrolyzes dTTP and UTP. May have a dual role in cell division arrest and in preventing the incorporation of modified nucleotides into cellular nucleic acids. The polypeptide is dTTP/UTP pyrophosphatase (Clostridium tetani (strain Massachusetts / E88)).